A 72-amino-acid polypeptide reads, in one-letter code: UPF0154 protein RBAM_017710 (72 aa).

Residues 4–24 (WVGILVGVVALLIGVALGFFI) form a helical membrane-spanning segment.

It belongs to the UPF0154 family.

The protein localises to the cell membrane. This is UPF0154 protein RBAM_017710 from Bacillus velezensis (strain DSM 23117 / BGSC 10A6 / LMG 26770 / FZB42) (Bacillus amyloliquefaciens subsp. plantarum).